Here is a 268-residue protein sequence, read N- to C-terminus: Interleukin-1 alpha (268 aa).

Positions 1 to 112 are excised as a propeptide; it reads MAKVPDLFED…DTEEEIIKPR (112 aa). At Lys-82 the chain carries N6-acetyllysine. The segment at 82–86 is nuclear localization signal (NLS); it reads KKRRL. Ser-87 is subject to Phosphoserine. Residues Asn-102 and Asn-141 are each glycosylated (N-linked (GlcNAc...) asparagine).

This sequence belongs to the IL-1 family. In terms of assembly, monomer. Interacts with TMED10; the interaction mediates the translocation from the cytoplasm into the ERGIC (endoplasmic reticulum-Golgi intermediate compartment) and thereby secretion. Interacts with IL1R1. Interacts with S100A13; this interaction is the first step in the export of IL1A, followed by direct translocation of this complex across the plasma membrane. Post-translationally, acetylated within its nuclear localization sequence, which impacts subcellular localization. Proteolytic processed by CAPN1 in a calcium-dependent manner. Cleavage from 31 kDa precursor to 18 kDa biologically active molecules. In terms of processing, phosphorylated. Phosphorylation greatly enhances susceptibility to digestion and promotes the conversion of pre-IL1A alpha to the biologically active IL1A.

Its subcellular location is the nucleus. The protein localises to the cytoplasm. It localises to the secreted. Functionally, cytokine constitutively present intracellularly in nearly all resting non-hematopoietic cells that plays an important role in inflammation and bridges the innate and adaptive immune systems. After binding to its receptor IL1R1 together with its accessory protein IL1RAP, forms the high affinity interleukin-1 receptor complex. Signaling involves the recruitment of adapter molecules such as MYD88, IRAK1 or IRAK4. In turn, mediates the activation of NF-kappa-B and the three MAPK pathways p38, p42/p44 and JNK pathways. Within the cell, acts as an alarmin and cell death results in its liberation in the extracellular space after disruption of the cell membrane to induce inflammation and alert the host to injury or damage. In addition to its role as a danger signal, which occurs when the cytokine is passively released by cell necrosis, directly senses DNA damage and acts as signal for genotoxic stress without loss of cell integrity. This Capra hircus (Goat) protein is Interleukin-1 alpha (IL1A).